The primary structure comprises 376 residues: Putative transmembrane protein 183BP (376 aa).

2 disordered regions span residues Met1 to Lys20 and Ala102 to Gly127. Residues Leu300–Val320 traverse the membrane as a helical segment.

This sequence belongs to the TMEM183 family. As to expression, expressed in brain, lung, pancreas, thymus, intestine and blood. Not detected in heart, placenta, liver, muscle, kidney, spleen, prostate, testis, ovary and colon.

The protein resides in the membrane. In Homo sapiens (Human), this protein is Putative transmembrane protein 183BP.